A 323-amino-acid chain; its full sequence is Thymidylate synthase (323 aa).

DUMP is bound by residues Arg21 and 172–173 (RR). Catalysis depends on Cys192, which acts as the Nucleophile. DUMP-binding positions include 214 to 217 (RSND), Asn225, and 255 to 257 (HVY). Asp217 lines the (6R)-5,10-methylene-5,6,7,8-tetrahydrofolate pocket. Ala322 serves as a coordination point for (6R)-5,10-methylene-5,6,7,8-tetrahydrofolate.

This sequence belongs to the thymidylate synthase family. Bacterial-type ThyA subfamily. Homodimer.

The protein resides in the cytoplasm. The enzyme catalyses dUMP + (6R)-5,10-methylene-5,6,7,8-tetrahydrofolate = 7,8-dihydrofolate + dTMP. Its pathway is pyrimidine metabolism; dTTP biosynthesis. Functionally, catalyzes the reductive methylation of 2'-deoxyuridine-5'-monophosphate (dUMP) to 2'-deoxythymidine-5'-monophosphate (dTMP) while utilizing 5,10-methylenetetrahydrofolate (mTHF) as the methyl donor and reductant in the reaction, yielding dihydrofolate (DHF) as a by-product. This enzymatic reaction provides an intracellular de novo source of dTMP, an essential precursor for DNA biosynthesis. The chain is Thymidylate synthase from Pseudomonas syringae pv. tomato (strain ATCC BAA-871 / DC3000).